A 95-amino-acid chain; its full sequence is Small ribosomal subunit protein bS6 (95 aa).

Belongs to the bacterial ribosomal protein bS6 family.

Binds together with bS18 to 16S ribosomal RNA. The polypeptide is Small ribosomal subunit protein bS6 (Clostridium kluyveri (strain NBRC 12016)).